Consider the following 27-residue polypeptide: Cupiennin-3a (27 aa).

Glu-27 is modified (glutamic acid 1-amide).

Expressed by the venom gland.

The protein localises to the secreted. The chain is Cupiennin-3a from Cupiennius salei (American wandering spider).